Here is a 96-residue protein sequence, read N- to C-terminus: Phosphoribosyl-ATP pyrophosphatase (96 aa).

It belongs to the PRA-PH family.

It localises to the cytoplasm. It catalyses the reaction 1-(5-phospho-beta-D-ribosyl)-ATP + H2O = 1-(5-phospho-beta-D-ribosyl)-5'-AMP + diphosphate + H(+). It participates in amino-acid biosynthesis; L-histidine biosynthesis; L-histidine from 5-phospho-alpha-D-ribose 1-diphosphate: step 2/9. The sequence is that of Phosphoribosyl-ATP pyrophosphatase from Methanococcus maripaludis (strain C6 / ATCC BAA-1332).